The following is a 1012-amino-acid chain: Putative cellulose synthase-like protein D5 (1012 aa).

Residues 1–85 (MSGDYANYTV…APSSNKSLLV (85 aa)) are disordered. Residues 20–37 (PSGGAPPAAPSAGGARPG) show a composition bias toward low complexity. The span at 57–69 (GGGDDGAKMDRRL) shows a compositional bias: basic and acidic residues. 2 consecutive transmembrane segments (helical) span residues 150–170 (ILSP…LFLV) and 180–200 (ALWL…SWLL). Residue Asp-280 is part of the active site. A disordered region spans residues 597 to 620 (PRQGSEAMPGAGGGRSGGGSVGGD). Residues 606–618 (GAGGGRSGGGSVG) are compositionally biased toward gly residues. The active site involves Asp-717. The next 6 membrane-spanning stretches (helical) occupy residues 799 to 819 (LFLI…QFIV), 825 to 845 (TFLS…LLEV), 871 to 891 (LAAV…SFTL), 914 to 934 (SLFI…VVGV), 948 to 968 (LLGG…FAKG), and 978 to 998 (TIVY…WITI).

The protein belongs to the glycosyltransferase 2 family. Plant cellulose synthase-like D subfamily.

It localises to the golgi apparatus membrane. In terms of biological role, thought to be a Golgi-localized beta-glycan synthase that polymerize the backbones of noncellulosic polysaccharides (hemicelluloses) of plant cell wall. In Oryza sativa subsp. indica (Rice), this protein is Putative cellulose synthase-like protein D5 (CSLD5).